Reading from the N-terminus, the 3601-residue chain is Protein SPIRRIG (3601 aa).

Disordered stretches follow at residues 17-50, 398-426, 449-476, 638-657, 1954-1993, 2009-2049, and 2715-2747; these read AQSS…PSSS, SSNH…ADFS, PAEP…TSSV, QYSG…SFRK, HIND…SLGS, ENIL…DFQD, and TTHV…EKEL. The segment covering 32 to 50 has biased composition (low complexity); that stretch reads PPSSSSSSSSPSFTYPSSS. 2 stretches are compositionally biased toward polar residues: residues 416–426 and 458–476; these read NTNSTENADFS and SRSS…TSSV. Polar residues predominate over residues 1974–1991; that stretch reads STKTSISVGSFPQGQVSL. Positions 2027–2048 are enriched in basic and acidic residues; it reads EDVKKQDDHHVGPSASSERDFQ. The segment covering 2715-2731 has biased composition (polar residues); sequence TTHVKSETGSPRHSSSA. A compositionally biased stretch (basic and acidic residues) spans 2732-2747; sequence KMDETNGREEKSEKEL. A BEACH-type PH domain is found at 2760–2927; the sequence is EHLEKIRFRY…EREEVFKNLV (168 aa). A BEACH domain is found at 2952-3244; it reads GGRLFKLMAK…QLFPKAHVKR (293 aa). WD repeat units lie at residues 3328–3367, 3378–3417, 3464–3507, and 3540–3579; these read HESN…PRGS, AHTA…FVRQ, PSDS…DPVS, and FHKQ…LRAS.

Interacts with DCP1. Expressed in flowers, leaves, stems, hypocotyls and roots.

The protein resides in the cytoplasm. It is found in the P-body. In terms of biological role, involved in cell morphogenesis. May have a function in membrane fusion or membrane composition. Required for salt stress tolerance. Regulates the salt stress-dependent post-transcriptional stabilization, cytoplasmic agglomeration, and localization to P-bodies of a subset of salt stress-regulated mRNAs. The sequence is that of Protein SPIRRIG from Arabidopsis thaliana (Mouse-ear cress).